The sequence spans 73 residues: MRIKVKVKPGTSKNEVKKIDENLYEVRTTTIPEKGKANEKVVELLSDFFDVPKSKIKIVKGQTSREKEVEVGE.

This sequence belongs to the UPF0235 family.

This chain is UPF0235 protein SYO3AOP1_0257, found in Sulfurihydrogenibium sp. (strain YO3AOP1).